Here is a 147-residue protein sequence, read N- to C-terminus: Protein-export protein SecB (147 aa).

This sequence belongs to the SecB family. In terms of assembly, homotetramer, a dimer of dimers. One homotetramer interacts with 1 SecA dimer.

The protein localises to the cytoplasm. Functionally, one of the proteins required for the normal export of preproteins out of the cell cytoplasm. It is a molecular chaperone that binds to a subset of precursor proteins, maintaining them in a translocation-competent state. It also specifically binds to its receptor SecA. This is Protein-export protein SecB from Neisseria meningitidis serogroup B (strain ATCC BAA-335 / MC58).